A 781-amino-acid polypeptide reads, in one-letter code: LPS-assembly protein LptD (781 aa).

An N-terminal signal peptide occupies residues 1–24 (MKKNYYTVLSLSILTALYSTSSQA).

Belongs to the LptD family. As to quaternary structure, component of the lipopolysaccharide transport and assembly complex. Interacts with LptE and LptA.

It is found in the cell outer membrane. Its function is as follows. Together with LptE, is involved in the assembly of lipopolysaccharide (LPS) at the surface of the outer membrane. This chain is LPS-assembly protein LptD, found in Histophilus somni (strain 129Pt) (Haemophilus somnus).